The sequence spans 184 residues: Troponin I, slow skeletal muscle (184 aa).

P1 carries the post-translational modification N-acetylproline; partial. Positions 1-45 are involved in binding TNC; sequence PEVERKSKITASRKLLKSLMLAKAKECQQEHEAREAEKVRYLAER. Position 55 is a phosphoserine (S55). The involved in binding TNC and actin stretch occupies residues 94–115; that stretch reads LKLKVLDLRGKFKRPPLRRVRV.

This sequence belongs to the troponin I family. In terms of assembly, binds to actin and tropomyosin. Post-translationally, in the muscle sample, approximately 25% of the chains were blocked. Pro-1 is probably acetylated. The N-terminus is blocked.

Functionally, troponin I is the inhibitory subunit of troponin, the thin filament regulatory complex which confers calcium-sensitivity to striated muscle actomyosin ATPase activity. The polypeptide is Troponin I, slow skeletal muscle (TNNI1) (Oryctolagus cuniculus (Rabbit)).